The primary structure comprises 455 residues: Adenylyltransferase and sulfurtransferase MOCS3 (455 aa).

ATP contacts are provided by residues glycine 90, aspartate 111, serine 118–arginine 122, lysine 135, and aspartate 179–asparagine 180. The tract at residues alanine 156–serine 236 is interaction with NFS1. 2 residues coordinate Zn(2+): cysteine 220 and cysteine 223. The active-site Glycyl thioester intermediate; for adenylyltransferase activity is the cysteine 237. Zn(2+) contacts are provided by cysteine 295 and cysteine 298. A disulfide bond links cysteine 314 and cysteine 322. Positions serine 345–proline 453 constitute a Rhodanese domain. Cysteine 410 (cysteine persulfide intermediate; for sulfurtransferase activity) is an active-site residue. At cysteine 410 the chain carries Cysteine persulfide.

It in the N-terminal section; belongs to the HesA/MoeB/ThiF family. UBA4 subfamily. In terms of assembly, interacts with NFS1. It depends on Zn(2+) as a cofactor.

Its subcellular location is the cytoplasm. It localises to the cytosol. It catalyses the reaction [molybdopterin-synthase sulfur-carrier protein]-C-terminal Gly-Gly + ATP + H(+) = [molybdopterin-synthase sulfur-carrier protein]-C-terminal Gly-Gly-AMP + diphosphate. The enzyme catalyses [molybdopterin-synthase sulfur-carrier protein]-C-terminal Gly-Gly-AMP + S-sulfanyl-L-cysteinyl-[cysteine desulfurase] + AH2 = [molybdopterin-synthase sulfur-carrier protein]-C-terminal-Gly-aminoethanethioate + L-cysteinyl-[cysteine desulfurase] + A + AMP + 2 H(+). It participates in tRNA modification; 5-methoxycarbonylmethyl-2-thiouridine-tRNA biosynthesis. The protein operates within cofactor biosynthesis; molybdopterin biosynthesis. Functionally, plays a central role in 2-thiolation of mcm(5)S(2)U at tRNA wobble positions of cytosolic tRNA(Lys), tRNA(Glu) and tRNA(Gln). Also essential during biosynthesis of the molybdenum cofactor. Acts by mediating the C-terminal thiocarboxylation of sulfur carriers URM1 and MOCS2A. Its N-terminus first activates URM1 and MOCS2A as acyl-adenylates (-COAMP), then the persulfide sulfur on the catalytic cysteine is transferred to URM1 and MOCS2A to form thiocarboxylation (-COSH) of their C-terminus. The reaction probably involves hydrogen sulfide that is generated from the persulfide intermediate and that acts as a nucleophile towards URM1 and MOCS2A. Subsequently, a transient disulfide bond is formed. Does not use thiosulfate as sulfur donor; NFS1 acting as a sulfur donor for thiocarboxylation reactions. This is Adenylyltransferase and sulfurtransferase MOCS3 from Bos taurus (Bovine).